Consider the following 229-residue polypeptide: MGQKVNPIGFRLAVNKDWRSKWYATGQDYATKLHEDLVMRKYIKEQLMSAAVSSIVIERAWNSVRITVHTARPGLVIGRKGEEIEKIRQYLQGLCGASTQVNIDIVEIRSPETDAQLIAENVAVQLERRVSFRRAMKRAVQVAMERGADGIRIRCAGRLGGADIARAEWYREGKVPLQTLRTPIDYGFAEARTLYGIIGVKCWVNKRDEVVSQQNSRPSGPRGPRRPRA.

Residues 39–109 (MRKYIKEQLM…QVNIDIVEIR (71 aa)) form the KH type-2 domain. Residues 210–229 (VVSQQNSRPSGPRGPRRPRA) form a disordered region.

It belongs to the universal ribosomal protein uS3 family. As to quaternary structure, part of the 30S ribosomal subunit. Forms a tight complex with proteins S10 and S14.

In terms of biological role, binds the lower part of the 30S subunit head. Binds mRNA in the 70S ribosome, positioning it for translation. The polypeptide is Small ribosomal subunit protein uS3 (Akkermansia muciniphila (strain ATCC BAA-835 / DSM 22959 / JCM 33894 / BCRC 81048 / CCUG 64013 / CIP 107961 / Muc)).